A 146-amino-acid chain; its full sequence is Hemoglobin subunit beta-0 (146 aa).

In terms of domain architecture, Globin spans 2-146 (EWTDFERATI…VVSSLGRQYH (145 aa)). Residues H63 and H92 each contribute to the heme b site.

It belongs to the globin family. Heterotetramer of two alpha chains and two beta chains. In terms of tissue distribution, red blood cells.

Functionally, involved in oxygen transport from gills to the various peripheral tissues. The polypeptide is Hemoglobin subunit beta-0 (hbb0) (Pagothenia borchgrevinki (Bald rockcod)).